The chain runs to 67 residues: Protein SlyX homolog (67 aa).

Positions 48-60 are enriched in polar residues; it reads TSAPSTAAESNPQ. Residues 48-67 form a disordered region; sequence TSAPSTAAESNPQHEIPPHY.

This sequence belongs to the SlyX family.

The polypeptide is Protein SlyX homolog (Cupriavidus pinatubonensis (strain JMP 134 / LMG 1197) (Cupriavidus necator (strain JMP 134))).